The chain runs to 164 residues: Large ribosomal subunit protein bL9 (164 aa).

The protein belongs to the bacterial ribosomal protein bL9 family.

Its function is as follows. Binds to the 23S rRNA. This Psychrobacter sp. (strain PRwf-1) protein is Large ribosomal subunit protein bL9.